We begin with the raw amino-acid sequence, 259 residues long: Global transcriptional regulator CodY (259 aa).

Positions 1–155 (MNLLEKTRKI…GATVVGMEIL (155 aa)) are GAF domain. A DNA-binding region (H-T-H motif) is located at residues 203 to 222 (ASKIADRVGITRSVIVNALR). Serine 215 is modified (phosphoserine).

This sequence belongs to the CodY family.

The protein localises to the cytoplasm. Functionally, DNA-binding global transcriptional regulator which is involved in the adaptive response to starvation and acts by directly or indirectly controlling the expression of numerous genes in response to nutrient availability. During rapid exponential growth, CodY is highly active and represses genes whose products allow adaptation to nutrient depletion. The chain is Global transcriptional regulator CodY from Lysinibacillus sphaericus (strain C3-41).